Here is a 421-residue protein sequence, read N- to C-terminus: UDP-N-acetylglucosamine 1-carboxyvinyltransferase (421 aa).

A phosphoenolpyruvate-binding site is contributed by 22 to 23 (KN). Position 94 (Arg-94) interacts with UDP-N-acetyl-alpha-D-glucosamine. Cys-118 functions as the Proton donor in the catalytic mechanism. 2-(S-cysteinyl)pyruvic acid O-phosphothioketal is present on Cys-118. UDP-N-acetyl-alpha-D-glucosamine is bound by residues 163 to 166 (KVSV), Asp-308, and Ile-330.

Belongs to the EPSP synthase family. MurA subfamily.

The protein localises to the cytoplasm. The catalysed reaction is phosphoenolpyruvate + UDP-N-acetyl-alpha-D-glucosamine = UDP-N-acetyl-3-O-(1-carboxyvinyl)-alpha-D-glucosamine + phosphate. Its pathway is cell wall biogenesis; peptidoglycan biosynthesis. Its function is as follows. Cell wall formation. Adds enolpyruvyl to UDP-N-acetylglucosamine. This Orientia tsutsugamushi (strain Ikeda) (Rickettsia tsutsugamushi) protein is UDP-N-acetylglucosamine 1-carboxyvinyltransferase.